The following is a 376-amino-acid chain: Proton extrusion protein PxcA (376 aa).

4 helical membrane-spanning segments follow: residues 150–170 (TLIS…VQQM), 251–271 (AVKN…VCII), 299–319 (IILF…QVLL), and 334–354 (FILL…KYWI).

Belongs to the CemA family.

It localises to the cell inner membrane. Its function is as follows. Required for H(+) efflux immediately after light irradiation to form a rapid H(+) concentration gradient across the thylakoid membranes. Together with PxcL, contributes to transient H(+) uptake following dark to light transition. This is Proton extrusion protein PxcA from Prochlorococcus marinus (strain MIT 9303).